Reading from the N-terminus, the 523-residue chain is Signal peptide peptidase-like 2A (523 aa).

A signal peptide spans 1–25; that stretch reads MGLLHSLHAPAAALLWSCLLGLAAA. Residues 26 to 175 lie on the Lumenal side of the membrane; sequence QEAILHASTN…PSWPNFDYTL (150 aa). Asn51, Asn61, Asn69, Asn119, Asn129, and Asn135 each carry an N-linked (GlcNAc...) asparagine glycan. Residues 70 to 155 enclose the PA domain; it reads LTGTALCHLS…KDFKDMKETL (86 aa). A helical transmembrane segment spans residues 176-196; sequence VVIFVIAVFTVALGGYWSGLI. At 197-224 the chain is on the cytoplasmic side; the sequence is ELENMKSVEDAEDRETRKKKDDYLTFSP. A helical membrane pass occupies residues 225–245; sequence LTVVVFVVICCIMIVLLYFFY. The Lumenal segment spans residues 246-247; it reads RW. A helical transmembrane segment spans residues 248–268; that stretch reads LVYVMIAIFCIASSMSLYNCL. Residues 269–288 are Cytoplasmic-facing; it reads SALIHRMPCGQCTILCCGKN. The helical transmembrane segment at 289–309 threads the bilayer; that stretch reads IKVSLIFLSGLCISVAVVWAV. Over 310-315 the chain is Lumenal; that stretch reads FRNEDR. A helical transmembrane segment spans residues 316-336; that stretch reads WAWILQDILGIAFCLNLIKTM. The Cytoplasmic segment spans residues 337–344; that stretch reads KLPNFMSC. The helical transmembrane segment at 345–365 threads the bilayer; it reads VILLGLLLIYDVFFVFITPFI. Asp355 is an active-site residue. Residues 366 to 403 lie on the Lumenal side of the membrane; it reads TKNGESIMVELAAGPFENAEKLPVVIRVPKLMGYSVMS. A helical transmembrane segment spans residues 404–424; the sequence is VCSVPVSVLGFGDIIVPGLLI. The active site involves Asp416. At 425–440 the chain is on the cytoplasmic side; the sequence is AYCRRFDVQTGSSIYY. A helical transmembrane segment spans residues 441-461; that stretch reads ISSTIAYAVGMIITFVVLMVM. Residues 462 to 463 lie on the Lumenal side of the membrane; the sequence is KT. The helical transmembrane segment at 464 to 484 threads the bilayer; sequence GQPALLYLVPCTLITVSVVAW. Residues 466–468 carry the PAL motif; the sequence is PAL. Topologically, residues 485 to 523 are cytoplasmic; that stretch reads SRKEMKKFWKGSSYQVMDHLDYSTNEENPVTTDEQIVQQ. Residues 498–501 carry the YXXo lysosomal targeting motif motif; it reads YQVM.

It belongs to the peptidase A22B family. Interacts with ITM2B. Glycosylated.

It is found in the late endosome membrane. The protein localises to the lysosome membrane. The protein resides in the membrane. Functionally, intramembrane-cleaving aspartic protease (I-CLiP) that cleaves type II membrane signal peptides in the hydrophobic plane of the membrane. Functions in FASLG, ITM2B and TNF processing. Catalyzes the intramembrane cleavage of the anchored fragment of shed TNF-alpha (TNF), which promotes the release of the intracellular domain (ICD) for signaling to the nucleus. Also responsible for the intramembrane cleavage of Fas antigen ligand FASLG, which promotes the release of the intracellular FasL domain (FasL ICD). Essential for degradation of the invariant chain CD74 that plays a central role in the function of antigen-presenting cells in the immune system. Plays a role in the regulation of innate and adaptive immunity. This chain is Signal peptide peptidase-like 2A, found in Mus musculus (Mouse).